A 451-amino-acid chain; its full sequence is UPF0210 protein LMHCC_2097 (451 aa).

It belongs to the UPF0210 family. As to quaternary structure, homodimer.

The sequence is that of UPF0210 protein LMHCC_2097 from Listeria monocytogenes serotype 4a (strain HCC23).